The primary structure comprises 246 residues: Probable transcriptional regulatory protein TM1040_1893 (246 aa).

Residues 1-21 are disordered; sequence MAGHSKWANIQHRKGRQDAAR.

Belongs to the TACO1 family.

It localises to the cytoplasm. The protein is Probable transcriptional regulatory protein TM1040_1893 of Ruegeria sp. (strain TM1040) (Silicibacter sp.).